The following is a 259-amino-acid chain: Peroxiredoxin-4 (259 aa).

A Thioredoxin domain is found at 66–224 (IRIRKPAPAF…AIRTLKALKF (159 aa)). Cysteine 111 (cysteine sulfenic acid (-SOH) intermediate) is an active-site residue.

This sequence belongs to the peroxiredoxin family. AhpC/Prx1 subfamily. As to quaternary structure, homodimer; disulfide-linked, upon oxidation. 5 homodimers assemble to form a ring-like decamer.

It is found in the cytoplasm. The protein resides in the endoplasmic reticulum. The enzyme catalyses a hydroperoxide + [thioredoxin]-dithiol = an alcohol + [thioredoxin]-disulfide + H2O. Its function is as follows. Thiol-specific peroxidase that catalyzes the reduction of hydrogen peroxide and organic hydroperoxides to water and alcohols, respectively. Plays a role in cell protection against oxidative stress by detoxifying peroxides and as sensor of hydrogen peroxide-mediated signaling events. Regulates the activation of NF-kappa-B in the cytosol by a modulation of I-kappa-B-alpha phosphorylation. This chain is Peroxiredoxin-4 (prdx4), found in Dictyostelium discoideum (Social amoeba).